The primary structure comprises 87 residues: Glutaredoxin (87 aa).

A Glutaredoxin domain is found at 1 to 87; that stretch reads MFKVYGYDSN…GFDQLREYFK (87 aa). A disulfide bond links Cys-14 and Cys-17.

Belongs to the glutaredoxin family.

Serves as a reducing agent for the phage-induced ribonucleotide reductase, but not for the bacterial ones. This specificity may be the result of sequence differences around the redox-active disulfide bond. The oxidized form accepts electrons from bacterial glutathione and will, in turn, reduce other small disulfides. Can also be reduced by NADPH and by bacterial thioredoxin reductase. The chain is Glutaredoxin (NRDC) from Enterobacteria phage T4 (Bacteriophage T4).